Reading from the N-terminus, the 100-residue chain is Small ribosomal subunit protein uS14 (100 aa).

Positions 63, 66, 79, and 82 each coordinate Zn(2+).

The protein belongs to the universal ribosomal protein uS14 family. In terms of assembly, part of the 30S ribosomal subunit. Contacts proteins S3 and S10. It depends on Zn(2+) as a cofactor.

In terms of biological role, binds 16S rRNA, required for the assembly of 30S particles and may also be responsible for determining the conformation of the 16S rRNA at the A site. This is Small ribosomal subunit protein uS14 (rpsN) from Legionella pneumophila (strain Paris).